Here is a 629-residue protein sequence, read N- to C-terminus: Extracellular metalloproteinase 10 (629 aa).

The signal sequence occupies residues 1 to 19; that stretch reads MHGLLLAAGLLSLPLYTIA. The propeptide occupies 20 to 240; it reads HTQPSGALSR…VHNVVDYVAH (221 aa). N-linked (GlcNAc...) asparagine glycans are attached at residues asparagine 281 and asparagine 331. Histidine 424 is a Zn(2+) binding site. Glutamate 425 is an active-site residue. Histidine 428 is a Zn(2+) binding site. N-linked (GlcNAc...) asparagine glycosylation is found at asparagine 469 and asparagine 617.

It belongs to the peptidase M36 family. It depends on Zn(2+) as a cofactor.

It localises to the secreted. Functionally, secreted metalloproteinase that allows assimilation of proteinaceous substrates and probably acts as a virulence factor. This chain is Extracellular metalloproteinase 10 (MEP10), found in Coccidioides posadasii (strain C735) (Valley fever fungus).